The sequence spans 385 residues: Glucose-fructose oxidoreductase domain-containing protein 2 (385 aa).

Residues 1–25 (MKMLPGVGVFGTGSSARVLVPLLRA) form the signal peptide.

It belongs to the Gfo/Idh/MocA family.

It localises to the secreted. It is found in the extracellular space. Its subcellular location is the extracellular matrix. Its function is as follows. Promotes matrix assembly. This Bos taurus (Bovine) protein is Glucose-fructose oxidoreductase domain-containing protein 2 (GFOD2).